The sequence spans 297 residues: L-ribulose 3-epimerase (297 aa).

The active-site Proton donor/acceptor is the Glu147. A Mn(2+)-binding site is contributed by Glu147. Substrate is bound by residues Glu153 and 180–183; that span reads DTFH. Positions 180 and 206 each coordinate Mn(2+). A substrate-binding site is contributed by Arg212. Residue Glu241 is the Proton donor/acceptor of the active site. Glu241 is a Mn(2+) binding site.

It belongs to the hyi family. Homotetramer. Mn(2+) is required as a cofactor.

The enzyme catalyses L-ribulose = L-xylulose. It carries out the reaction keto-D-tagatose = keto-D-sorbose. It catalyses the reaction D-allulose = keto-D-fructose. With respect to regulation, strongly inhibited by Co(2+) and Ni(2+), and slightly inhibited by EDTA. Catalyzes the epimerization of various ketoses at the C(3) position. It is able to interconvert L-ribulose with high efficiency. The enzyme can also accept other ketopentoses such as D-psicose and D-tagatose with lower efficiency. This chain is L-ribulose 3-epimerase, found in Mesorhizobium japonicum (strain LMG 29417 / CECT 9101 / MAFF 303099) (Mesorhizobium loti (strain MAFF 303099)).